Consider the following 407-residue polypeptide: uncharacterized protein (407 aa).

The next 12 membrane-spanning stretches (helical) occupy residues 22-42, 51-71, 101-121, 126-146, 154-174, 179-199, 227-247, 258-278, 286-306, 309-329, 347-367, and 369-389; these read IVSVVSFTFICYLTIGLPLAV, LGFSAIVAGAAISVQYFATLA, ALLLSAFAFARWPAASIVLLV, VLGIGESLVGTGAILWGIGRV, VISWNGIATYGALAIGAPVGV, ALIPAVLGMLVIALAALGYYL, GLGLALGSAGFGSIATFITLY, LSLTVFGTLFIGARLLFANTI, VAIVSFAFECAGLLMLWLAPV, VALVGAALTGFGFALIFPALG, AYSVFLDLSLGITGPLAGYVA, and AFGYPQVFLCAAVAAAAGVAL.

The protein belongs to the major facilitator superfamily. YhhS family.

The protein localises to the cell inner membrane. This is an uncharacterized protein from Burkholderia pseudomallei (strain 1106a).